Reading from the N-terminus, the 246-residue chain is Eukaryotic translation initiation factor 6 (246 aa).

Phosphoserine; by CK1 occurs at positions 174 and 175.

The protein belongs to the eIF-6 family. Monomer. Associates with the 60S ribosomal subunit. Phosphorylation at Ser-174 and Ser-175 promotes nuclear export.

The protein resides in the cytoplasm. It localises to the nucleus. Its subcellular location is the nucleolus. Binds to the 60S ribosomal subunit and prevents its association with the 40S ribosomal subunit to form the 80S initiation complex in the cytoplasm. Is also involved in ribosome biogenesis. Associates with pre-60S subunits in the nucleus and is involved in its nuclear export. This is Eukaryotic translation initiation factor 6 from Verticillium alfalfae (strain VaMs.102 / ATCC MYA-4576 / FGSC 10136) (Verticillium wilt of alfalfa).